The sequence spans 177 residues: ATP synthase subunit delta (177 aa).

It belongs to the ATPase delta chain family. As to quaternary structure, F-type ATPases have 2 components, F(1) - the catalytic core - and F(0) - the membrane proton channel. F(1) has five subunits: alpha(3), beta(3), gamma(1), delta(1), epsilon(1). F(0) has three main subunits: a(1), b(2) and c(10-14). The alpha and beta chains form an alternating ring which encloses part of the gamma chain. F(1) is attached to F(0) by a central stalk formed by the gamma and epsilon chains, while a peripheral stalk is formed by the delta and b chains.

The protein localises to the cell inner membrane. Its function is as follows. F(1)F(0) ATP synthase produces ATP from ADP in the presence of a proton or sodium gradient. F-type ATPases consist of two structural domains, F(1) containing the extramembraneous catalytic core and F(0) containing the membrane proton channel, linked together by a central stalk and a peripheral stalk. During catalysis, ATP synthesis in the catalytic domain of F(1) is coupled via a rotary mechanism of the central stalk subunits to proton translocation. Functionally, this protein is part of the stalk that links CF(0) to CF(1). It either transmits conformational changes from CF(0) to CF(1) or is implicated in proton conduction. In Proteus mirabilis (strain HI4320), this protein is ATP synthase subunit delta.